We begin with the raw amino-acid sequence, 349 residues long: Phosphoribosylformylglycinamidine cyclo-ligase (349 aa).

This sequence belongs to the AIR synthase family.

It localises to the cytoplasm. The catalysed reaction is 2-formamido-N(1)-(5-O-phospho-beta-D-ribosyl)acetamidine + ATP = 5-amino-1-(5-phospho-beta-D-ribosyl)imidazole + ADP + phosphate + H(+). Its pathway is purine metabolism; IMP biosynthesis via de novo pathway; 5-amino-1-(5-phospho-D-ribosyl)imidazole from N(2)-formyl-N(1)-(5-phospho-D-ribosyl)glycinamide: step 2/2. The sequence is that of Phosphoribosylformylglycinamidine cyclo-ligase from Lactobacillus delbrueckii subsp. bulgaricus (strain ATCC 11842 / DSM 20081 / BCRC 10696 / JCM 1002 / NBRC 13953 / NCIMB 11778 / NCTC 12712 / WDCM 00102 / Lb 14).